The primary structure comprises 97 residues: Co-chaperonin GroES (97 aa).

This sequence belongs to the GroES chaperonin family. Heptamer of 7 subunits arranged in a ring. Interacts with the chaperonin GroEL.

The protein resides in the cytoplasm. Its function is as follows. Together with the chaperonin GroEL, plays an essential role in assisting protein folding. The GroEL-GroES system forms a nano-cage that allows encapsulation of the non-native substrate proteins and provides a physical environment optimized to promote and accelerate protein folding. GroES binds to the apical surface of the GroEL ring, thereby capping the opening of the GroEL channel. In Tolumonas auensis (strain DSM 9187 / NBRC 110442 / TA 4), this protein is Co-chaperonin GroES.